A 117-amino-acid chain; its full sequence is UPF0145 protein PH1682 (117 aa).

This sequence belongs to the UPF0145 family.

This Pyrococcus horikoshii (strain ATCC 700860 / DSM 12428 / JCM 9974 / NBRC 100139 / OT-3) protein is UPF0145 protein PH1682.